The chain runs to 285 residues: Putative cysteine-rich repeat secretory protein 14 (285 aa).

Residues 1–30 (MSSFCLSKHLILVPILVMMAQLLLIRNVLS) form the signal peptide. Gnk2-homologous domains are found at residues 37-143 (YLYH…SIST) and 161-273 (RPNA…RYPF).

This sequence belongs to the cysteine-rich repeat secretory protein family.

It is found in the secreted. The sequence is that of Putative cysteine-rich repeat secretory protein 14 (CRRSP14) from Arabidopsis thaliana (Mouse-ear cress).